Here is an 80-residue protein sequence, read N- to C-terminus: Delta-actitoxin-Amc2a (80 aa).

The first 19 residues, 1 to 19 (MNKVLFLCLVVLCATSAFA), serve as a signal peptide directing secretion. The propeptide occupies 20 to 30 (AEEEYVERAPV). Cystine bridges form between Cys37–Cys73, Cys39–Cys65, and Cys55–Cys74. At Pro56 the chain carries Hydroxyproline.

Belongs to the sea anemone type 3 (BDS) potassium channel toxin family.

It is found in the secreted. The protein localises to the nematocyst. In terms of biological role, neurotoxon that induces paralysis when injected into crabs. The chain is Delta-actitoxin-Amc2a from Antheopsis maculata (Sea anemone).